The primary structure comprises 452 residues: Bis(5'-adenosyl)-triphosphatase ENPP4 (452 aa).

The signal sequence occupies residues 1–15 (MKLLVILLFSGLITG). Topologically, residues 16–406 (FRSDSSSSLP…DQWCINLPEA (391 aa)) are extracellular. Zn(2+)-binding residues include Asp34 and Thr70. Residue Thr70 is the AMP-threonine intermediate of the active site. Asn91 and Tyr154 together coordinate substrate. N-linked (GlcNAc...) asparagine glycans are attached at residues Asn155 and Asn166. Residues Asp189, His193, Asp237, and His238 each contribute to the Zn(2+) site. Residue Asp189 participates in substrate binding. The cysteines at positions 254 and 287 are disulfide-linked. Asn276 carries an N-linked (GlcNAc...) asparagine glycan. Residue His335 coordinates Zn(2+). Cys393 and Cys400 are joined by a disulfide. Residues 407 to 427 (IAIVIGSLLVLTMLTCLIIIM) form a helical membrane-spanning segment. Residues 428 to 452 (QNRLSVPRPFSRLQLQEDDDDPLIG) are Cytoplasmic-facing.

The protein belongs to the nucleotide pyrophosphatase/phosphodiesterase family. The cofactor is Zn(2+).

Its subcellular location is the cell membrane. The enzyme catalyses P(1),P(3)-bis(5'-adenosyl) triphosphate + H2O = AMP + ADP + 2 H(+). Functionally, hydrolyzes extracellular Ap3A into AMP and ADP, and Ap4A into AMP and ATP. Ap3A and Ap4A are diadenosine polyphosphates thought to induce proliferation of vascular smooth muscle cells. Acts as a procoagulant, mediating platelet aggregation at the site of nascent thrombus via release of ADP from Ap3A and activation of ADP receptors. The polypeptide is Bis(5'-adenosyl)-triphosphatase ENPP4 (ENPP4) (Pongo abelii (Sumatran orangutan)).